The following is a 404-amino-acid chain: Cysteine desulfurase IscS (404 aa).

Pyridoxal 5'-phosphate is bound by residues 75 to 76 (AT), Asn155, Gln183, and 203 to 205 (SGH). N6-(pyridoxal phosphate)lysine is present on Lys206. Residue Thr243 participates in pyridoxal 5'-phosphate binding. Residue Cys328 is the Cysteine persulfide intermediate of the active site. A [2Fe-2S] cluster-binding site is contributed by Cys328.

Belongs to the class-V pyridoxal-phosphate-dependent aminotransferase family. NifS/IscS subfamily. Homodimer. Forms a heterotetramer with IscU, interacts with other sulfur acceptors. The cofactor is pyridoxal 5'-phosphate.

The protein localises to the cytoplasm. It carries out the reaction (sulfur carrier)-H + L-cysteine = (sulfur carrier)-SH + L-alanine. Its pathway is cofactor biosynthesis; iron-sulfur cluster biosynthesis. Functionally, master enzyme that delivers sulfur to a number of partners involved in Fe-S cluster assembly, tRNA modification or cofactor biosynthesis. Catalyzes the removal of elemental sulfur atoms from cysteine to produce alanine. Functions as a sulfur delivery protein for Fe-S cluster synthesis onto IscU, an Fe-S scaffold assembly protein, as well as other S acceptor proteins. The polypeptide is Cysteine desulfurase IscS (Shewanella denitrificans (strain OS217 / ATCC BAA-1090 / DSM 15013)).